Consider the following 179-residue polypeptide: Large ribosomal subunit protein uL5 (179 aa).

The protein belongs to the universal ribosomal protein uL5 family. In terms of assembly, part of the 50S ribosomal subunit; part of the 5S rRNA/L5/L18/L25 subcomplex. Contacts the 5S rRNA and the P site tRNA. Forms a bridge to the 30S subunit in the 70S ribosome.

In terms of biological role, this is one of the proteins that bind and probably mediate the attachment of the 5S RNA into the large ribosomal subunit, where it forms part of the central protuberance. In the 70S ribosome it contacts protein S13 of the 30S subunit (bridge B1b), connecting the 2 subunits; this bridge is implicated in subunit movement. Contacts the P site tRNA; the 5S rRNA and some of its associated proteins might help stabilize positioning of ribosome-bound tRNAs. This is Large ribosomal subunit protein uL5 from Shewanella sp. (strain ANA-3).